Consider the following 437-residue polypeptide: Adenosylhomocysteinase (437 aa).

Residues threonine 54, aspartate 125, and glutamate 170 each contribute to the substrate site. Residue 171–173 coordinates NAD(+); sequence TTT. Substrate is bound by residues lysine 200 and aspartate 204. Residues asparagine 205, 234-239, glutamate 258, asparagine 293, 314-316, and asparagine 361 each bind NAD(+); these read GYGWVG and AGH.

It belongs to the adenosylhomocysteinase family. The cofactor is NAD(+).

It localises to the cytoplasm. The catalysed reaction is S-adenosyl-L-homocysteine + H2O = L-homocysteine + adenosine. It functions in the pathway amino-acid biosynthesis; L-homocysteine biosynthesis; L-homocysteine from S-adenosyl-L-homocysteine: step 1/1. Its function is as follows. May play a key role in the regulation of the intracellular concentration of adenosylhomocysteine. This is Adenosylhomocysteinase from Pyrobaculum aerophilum (strain ATCC 51768 / DSM 7523 / JCM 9630 / CIP 104966 / NBRC 100827 / IM2).